The primary structure comprises 319 residues: Acetyl-coenzyme A carboxylase carboxyl transferase subunit alpha (319 aa).

The CoA carboxyltransferase C-terminal domain occupies Asn35 to Glu296.

This sequence belongs to the AccA family. As to quaternary structure, acetyl-CoA carboxylase is a heterohexamer composed of biotin carboxyl carrier protein (AccB), biotin carboxylase (AccC) and two subunits each of ACCase subunit alpha (AccA) and ACCase subunit beta (AccD).

It localises to the cytoplasm. The enzyme catalyses N(6)-carboxybiotinyl-L-lysyl-[protein] + acetyl-CoA = N(6)-biotinyl-L-lysyl-[protein] + malonyl-CoA. It functions in the pathway lipid metabolism; malonyl-CoA biosynthesis; malonyl-CoA from acetyl-CoA: step 1/1. Its function is as follows. Component of the acetyl coenzyme A carboxylase (ACC) complex. First, biotin carboxylase catalyzes the carboxylation of biotin on its carrier protein (BCCP) and then the CO(2) group is transferred by the carboxyltransferase to acetyl-CoA to form malonyl-CoA. The polypeptide is Acetyl-coenzyme A carboxylase carboxyl transferase subunit alpha (Photorhabdus laumondii subsp. laumondii (strain DSM 15139 / CIP 105565 / TT01) (Photorhabdus luminescens subsp. laumondii)).